A 359-amino-acid chain; its full sequence is DNA replication and repair protein RecF (359 aa).

Position 30–37 (30–37 (GPNGSGKT)) interacts with ATP.

Belongs to the RecF family.

The protein localises to the cytoplasm. In terms of biological role, the RecF protein is involved in DNA metabolism; it is required for DNA replication and normal SOS inducibility. RecF binds preferentially to single-stranded, linear DNA. It also seems to bind ATP. In Aliivibrio fischeri (strain MJ11) (Vibrio fischeri), this protein is DNA replication and repair protein RecF.